Reading from the N-terminus, the 137-residue chain is Structural protein A137R (137 aa).

The protein belongs to the asfivirus A137R family. Interacts with host TBK1.

It localises to the virion. Its subcellular location is the host cytoplasm. Plays a role in the inhibition of the host innate immune response. Mechanistically, promotes the autophagy-mediated lysosomal degradation of host TBK1 and affects IRF3 nuclear translocation to block type I IFN production. This is Structural protein A137R from Ornithodoros (relapsing fever ticks).